A 620-amino-acid chain; its full sequence is tRNA uridine 5-carboxymethylaminomethyl modification enzyme MnmG (620 aa).

FAD-binding positions include 13–18 (GGGHAG), Val-125, and Ser-182. 280-294 (GPRYCPSVEDKIVKF) lines the NAD(+) pocket. Position 377 (Asn-377) interacts with FAD.

The protein belongs to the MnmG family. In terms of assembly, homodimer. Heterotetramer of two MnmE and two MnmG subunits. The cofactor is FAD.

The protein resides in the cytoplasm. Functionally, NAD-binding protein involved in the addition of a carboxymethylaminomethyl (cmnm) group at the wobble position (U34) of certain tRNAs, forming tRNA-cmnm(5)s(2)U34. The polypeptide is tRNA uridine 5-carboxymethylaminomethyl modification enzyme MnmG (Sulfurihydrogenibium sp. (strain YO3AOP1)).